Here is a 325-residue protein sequence, read N- to C-terminus: Adenine deaminase (325 aa).

His-11, His-13, and His-189 together coordinate Zn(2+). Glu-192 (proton donor) is an active-site residue. Asp-270 contributes to the Zn(2+) binding site. Asp-271 is a substrate binding site.

The protein belongs to the metallo-dependent hydrolases superfamily. Adenosine and AMP deaminases family. Adenine deaminase type 2 subfamily. Zn(2+) is required as a cofactor.

It carries out the reaction adenine + H2O + H(+) = hypoxanthine + NH4(+). Catalyzes the hydrolytic deamination of adenine to hypoxanthine. Plays an important role in the purine salvage pathway and in nitrogen catabolism. The polypeptide is Adenine deaminase (Agrobacterium fabrum (strain C58 / ATCC 33970) (Agrobacterium tumefaciens (strain C58))).